We begin with the raw amino-acid sequence, 108 residues long: UPF0102 protein Sama_3355 (108 aa).

This sequence belongs to the UPF0102 family.

This Shewanella amazonensis (strain ATCC BAA-1098 / SB2B) protein is UPF0102 protein Sama_3355.